The chain runs to 495 residues: Probable cytosol aminopeptidase (495 aa).

Mn(2+)-binding residues include lysine 264 and aspartate 269. Residue lysine 276 is part of the active site. The Mn(2+) site is built by aspartate 287, aspartate 346, and glutamate 348. Arginine 350 is a catalytic residue.

Belongs to the peptidase M17 family. Requires Mn(2+) as cofactor.

The protein resides in the cytoplasm. The enzyme catalyses Release of an N-terminal amino acid, Xaa-|-Yaa-, in which Xaa is preferably Leu, but may be other amino acids including Pro although not Arg or Lys, and Yaa may be Pro. Amino acid amides and methyl esters are also readily hydrolyzed, but rates on arylamides are exceedingly low.. It catalyses the reaction Release of an N-terminal amino acid, preferentially leucine, but not glutamic or aspartic acids.. Its function is as follows. Presumably involved in the processing and regular turnover of intracellular proteins. Catalyzes the removal of unsubstituted N-terminal amino acids from various peptides. In Geotalea uraniireducens (strain Rf4) (Geobacter uraniireducens), this protein is Probable cytosol aminopeptidase.